The sequence spans 1399 residues: DNA-directed RNA polymerase subunit beta' (1399 aa).

4 residues coordinate Zn(2+): Cys70, Cys72, Cys85, and Cys88. The Mg(2+) site is built by Asp460, Asp462, and Asp464. Residues Cys814, Cys888, Cys895, and Cys898 each coordinate Zn(2+).

Belongs to the RNA polymerase beta' chain family. In terms of assembly, the RNAP catalytic core consists of 2 alpha, 1 beta, 1 beta' and 1 omega subunit. When a sigma factor is associated with the core the holoenzyme is formed, which can initiate transcription. It depends on Mg(2+) as a cofactor. The cofactor is Zn(2+).

It carries out the reaction RNA(n) + a ribonucleoside 5'-triphosphate = RNA(n+1) + diphosphate. Its function is as follows. DNA-dependent RNA polymerase catalyzes the transcription of DNA into RNA using the four ribonucleoside triphosphates as substrates. The polypeptide is DNA-directed RNA polymerase subunit beta' (Pseudomonas fluorescens (strain ATCC BAA-477 / NRRL B-23932 / Pf-5)).